The chain runs to 35 residues: Photosystem II reaction center protein T (35 aa).

The chain crosses the membrane as a helical span at residues 3 to 23 (ALVYTFLLVSTLGIIFFAIFF).

This sequence belongs to the PsbT family. PSII is composed of 1 copy each of membrane proteins PsbA, PsbB, PsbC, PsbD, PsbE, PsbF, PsbH, PsbI, PsbJ, PsbK, PsbL, PsbM, PsbT, PsbY, PsbZ, Psb30/Ycf12, at least 3 peripheral proteins of the oxygen-evolving complex and a large number of cofactors. It forms dimeric complexes.

Its subcellular location is the plastid. The protein resides in the chloroplast thylakoid membrane. Its function is as follows. Found at the monomer-monomer interface of the photosystem II (PS II) dimer, plays a role in assembly and dimerization of PSII. PSII is a light-driven water plastoquinone oxidoreductase, using light energy to abstract electrons from H(2)O, generating a proton gradient subsequently used for ATP formation. The sequence is that of Photosystem II reaction center protein T from Schisandra chinensis (Chinese magnolia vine).